Reading from the N-terminus, the 553-residue chain is Probable inactive serine/threonine-protein kinase samkD (553 aa).

The region spanning 24 to 90 (WDNETVCKWL…FEYQILKNCY (67 aa)) is the SAM domain. Residues 134–393 (YQYIETISKN…SKELLKSFWF (260 aa)) enclose the Protein kinase domain. ATP is bound by residues 140–148 (ISKNKFCEI) and Lys-165.

It belongs to the protein kinase superfamily. Ser/Thr protein kinase family.

This Dictyostelium discoideum (Social amoeba) protein is Probable inactive serine/threonine-protein kinase samkD (samkD).